Here is a 191-residue protein sequence, read N- to C-terminus: Protein YceI (191 aa).

A signal peptide spans 1–22; that stretch reads MKKSLLGLTFASLMFSAGSAVA.

The protein belongs to the UPF0312 family. Type 1 subfamily.

The protein localises to the periplasm. This Shigella flexneri protein is Protein YceI.